Reading from the N-terminus, the 346-residue chain is Structure-specific endonuclease subunit SLX1 (346 aa).

The GIY-YIG domain occupies 22-105 (DFYGVYLLRS…QHPYQTRHIK (84 aa)). The segment at 216–306 (CFICNETIDY…TPLQGKCLSC (91 aa)) adopts an SLX1-type zinc-finger fold.

The protein belongs to the SLX1 family. In terms of assembly, forms a heterodimer with SLX4. A divalent metal cation serves as cofactor.

It is found in the nucleus. Catalytic subunit of the SLX1-SLX4 structure-specific endonuclease that resolves DNA secondary structures generated during DNA repair and recombination. Has endonuclease activity towards branched DNA substrates, introducing single-strand cuts in duplex DNA close to junctions with ss-DNA. The protein is Structure-specific endonuclease subunit SLX1 of Debaryomyces hansenii (strain ATCC 36239 / CBS 767 / BCRC 21394 / JCM 1990 / NBRC 0083 / IGC 2968) (Yeast).